Consider the following 518-residue polypeptide: Kelch repeat and BTB domain-containing protein 4 (518 aa).

In terms of domain architecture, BTB spans 45 to 112 (ADVTISVEGR…IYHGTVKLRA (68 aa)). A BACK domain is found at 147–239 (CLQVMWLADR…SLKEIGENVH (93 aa)). 5 Kelch repeats span residues 239 to 285 (HIYL…KHGG), 286 to 328 (DLYV…SVPG), 331 to 378 (AIYS…NLNG), 380 to 430 (IYLL…VHKD), and 432 to 481 (VFIV…VFRD).

As to quaternary structure, component of the BCR(KBTBD4) E3 ubiquitin ligase complex, at least composed of CUL3, KBTBD4 and RBX1.

Substrate-specific adapter of a BCR (BTB-CUL3-RBX1) E3 ubiquitin ligase complex which targets CoREST corepressor complex components RCOR1, KDM1A/LSD1 and HDAC2 for proteasomal degradation. RCOR1 is likely to be the primary target while degradation of KDM1A and HDAC2 is likely due to their association with RCOR1. Also targets RCOR3, MIER2 and MIER3 for proteasomal degradation as well as associated proteins ZNF217 and RREB1. Degradation is dependent on the presence of an ELM2 domain in the target proteins. This is Kelch repeat and BTB domain-containing protein 4 (KBTBD4) from Pongo abelii (Sumatran orangutan).